Here is a 739-residue protein sequence, read N- to C-terminus: Phosphoribosylformylglycinamidine synthase subunit PurL (739 aa).

His-54 is a catalytic residue. The ATP site is built by Tyr-57 and Lys-96. Glu-98 is a binding site for Mg(2+). Substrate-binding positions include 99–102 and Arg-121; that span reads SHNH. His-100 acts as the Proton acceptor in catalysis. Residue Asp-122 participates in Mg(2+) binding. Gln-245 provides a ligand contact to substrate. Asp-273 contacts Mg(2+). Residue 317-319 coordinates substrate; it reads ESQ. Positions 500 and 537 each coordinate ATP. Residue Asn-538 participates in Mg(2+) binding. Ser-540 lines the substrate pocket.

This sequence belongs to the FGAMS family. As to quaternary structure, monomer. Part of the FGAM synthase complex composed of 1 PurL, 1 PurQ and 2 PurS subunits.

The protein resides in the cytoplasm. It carries out the reaction N(2)-formyl-N(1)-(5-phospho-beta-D-ribosyl)glycinamide + L-glutamine + ATP + H2O = 2-formamido-N(1)-(5-O-phospho-beta-D-ribosyl)acetamidine + L-glutamate + ADP + phosphate + H(+). It functions in the pathway purine metabolism; IMP biosynthesis via de novo pathway; 5-amino-1-(5-phospho-D-ribosyl)imidazole from N(2)-formyl-N(1)-(5-phospho-D-ribosyl)glycinamide: step 1/2. Functionally, part of the phosphoribosylformylglycinamidine synthase complex involved in the purines biosynthetic pathway. Catalyzes the ATP-dependent conversion of formylglycinamide ribonucleotide (FGAR) and glutamine to yield formylglycinamidine ribonucleotide (FGAM) and glutamate. The FGAM synthase complex is composed of three subunits. PurQ produces an ammonia molecule by converting glutamine to glutamate. PurL transfers the ammonia molecule to FGAR to form FGAM in an ATP-dependent manner. PurS interacts with PurQ and PurL and is thought to assist in the transfer of the ammonia molecule from PurQ to PurL. This Bacillus cereus (strain AH187) protein is Phosphoribosylformylglycinamidine synthase subunit PurL.